Reading from the N-terminus, the 521-residue chain is Lysine--tRNA ligase (521 aa).

The 'HIGH' region signature appears at 32–40 (PSGTVHIGN). The 'KMSKS' region signature appears at 280 to 284 (KISSS).

It belongs to the class-I aminoacyl-tRNA synthetase family.

It is found in the cytoplasm. It carries out the reaction tRNA(Lys) + L-lysine + ATP = L-lysyl-tRNA(Lys) + AMP + diphosphate. The sequence is that of Lysine--tRNA ligase from Borrelia garinii subsp. bavariensis (strain ATCC BAA-2496 / DSM 23469 / PBi) (Borreliella bavariensis).